The sequence spans 2726 residues: Filamin-C (2726 aa).

The segment at 1-260 (MMNNSNYSDA…VMTYLSQFPK (260 aa)) is actin-binding. S5 carries the phosphoserine modification. Calponin-homology (CH) domains follow at residues 37-143 (KIQQ…LHYS) and 160-263 (QTPK…KAKL). Filamin repeat units lie at residues 271-369 (SKQL…EVNV), 371-469 (MALG…PVHV), 470-566 (AEAC…EVQV), 567-659 (SPEA…IAHI), 663-759 (PPDC…RVNV), 760-862 (GEGS…HIKV), 863-961 (DPSH…VVNV), 962-1057 (APPL…AVEG), 1058-1150 (VLPP…KATI), 1151-1245 (QPVF…RVHV), 1246-1345 (QPAV…RVGV), 1346-1438 (TEGC…RVPV), 1439-1534 (KDVV…KIKV), 1535-1631 (LPAH…RIHA), and 1636-1735 (DASK…HVLA). R1003 carries the omega-N-methylarginine modification. S1162 and S1339 each carry phosphoserine. The interval 1736–1759 (CDPLPHVEEPAEVLQLHQPYAPLR) is hinge 1. Filamin repeat units follow at residues 1760–1854 (PGTC…LQFY), 1855–1947 (VDAI…TAKI), 1948–2034 (TGDD…KILV), and 2037–2129 (SEIG…TVKV). S2043 is subject to Phosphoserine. The intradomain insert; mediate targeting to Z lines stretch occupies residues 2163–2244 (GNWFQMVSAQ…FGSITRQQEG (82 aa)). The span at 2194–2210 (ISKTRGGETKREVRVEE) shows a compositional bias: basic and acidic residues. Residues 2194 to 2214 (ISKTRGGETKREVRVEESTQV) form a disordered region. A phosphoserine mark is found at S2234 and S2237. T2239 is modified (phosphothreonine). Positions 2241-2260 (QQEGEASSQDMTAQVTSPSG) are enriched in polar residues. Positions 2241 to 2261 (QQEGEASSQDMTAQVTSPSGK) are disordered. Residues 2245 to 2307 (EASSQDMTAQ…VPGSPFQFTV (63 aa)) form a Filamin 20; mediates interaction with XIRP1 repeat. Filamin repeat units follow at residues 2310–2402 (LGEG…VVPV), 2404–2497 (SLSD…KIRV), and 2501–2593 (SQAG…KAKV). Residues 2404-2725 (SLSDDARRLT…VPGSPFKVNV (322 aa)) form an interaction with INPPL1 region. Phosphoserine occurs at positions 2587, 2618, 2621, 2633, 2715, and 2719. Residues 2594-2630 (TGPRLSGGHSLHETSTVLVETVTKSSSSRGASYSSIP) are hinge 2. Residues 2594 to 2726 (TGPRLSGGHS…PGSPFKVNVP (133 aa)) form a self-association site, tail region. The Filamin 24 repeat unit spans residues 2631–2725 (KFSSDASKVV…VPGSPFKVNV (95 aa)).

The protein belongs to the filamin family. In terms of assembly, homodimer; the filamin repeat 24 and the second hinge domain are important for dimer formation. Interacts with FLNB, KCND2, INPPL1, ITGB1A, MYOT, MYOZ1 and MYOZ3. Interacts with sarcoglycans SGCD and SGCG. Interacts (via filament repeats 17-18, 20-21 and 24) with USP25 (isoform USP25m only). Interacts with FBLIM1. Interacts with KY. Interacts with IGFN1. Interacts with MICALL2. Interacts with XIRP1; this interaction is mediated by filamin 20 repeat. Interacts with ANK3. Interacts with SYNPO2. Ubiquitinated by FBXL22, leading to proteasomal degradation.

The protein localises to the cytoplasm. The protein resides in the membrane. Its subcellular location is the cytoskeleton. It localises to the myofibril. It is found in the sarcomere. The protein localises to the z line. Muscle-specific filamin, which plays a central role in sarcomere assembly and organization. Critical for normal myogenesis, it probably functions as a large actin-cross-linking protein with structural functions at the Z lines in muscle cells. May be involved in reorganizing the actin cytoskeleton in response to signaling events. The sequence is that of Filamin-C (Flnc) from Rattus norvegicus (Rat).